The chain runs to 150 residues: Catabolic 3-dehydroquinase (150 aa).

Y24 functions as the Proton acceptor in the catalytic mechanism. Positions 75, 81, and 88 each coordinate substrate. Catalysis depends on H101, which acts as the Proton donor. Substrate is bound by residues 102–103 (IS) and R112.

It belongs to the type-II 3-dehydroquinase family. Homododecamer. Adopts a ring-like structure, composed of an arrangement of two hexameric rings stacked on top of one another.

The enzyme catalyses 3-dehydroquinate = 3-dehydroshikimate + H2O. Its pathway is aromatic compound metabolism; 3,4-dihydroxybenzoate biosynthesis; 3,4-dihydroxybenzoate from 3-dehydroquinate: step 1/2. Is involved in the catabolism of quinate. Allows the utilization of quinate as carbon source via the beta-ketoadipate pathway. The protein is Catabolic 3-dehydroquinase of Verticillium alfalfae (strain VaMs.102 / ATCC MYA-4576 / FGSC 10136) (Verticillium wilt of alfalfa).